Consider the following 617-residue polypeptide: uncharacterized protein (617 aa).

A compositionally biased stretch (polar residues) spans 387–396 (NGGMSATQLP). Disordered regions lie at residues 387-419 (NGGM…HAAP) and 443-599 (YDDF…NNEQ). The segment covering 404-414 (RQAAANQFQQR) has biased composition (low complexity). Positions 453 to 474 (QPLTQQQKDAARQRYQSASPEQ) are enriched in polar residues. 2 stretches are compositionally biased toward basic and acidic residues: residues 490-499 (QRREAARERI) and 522-531 (QRRDAARERI). Residues 549–570 (RPLNQQQRDNARQRVQSASPEQ) show a composition bias toward polar residues. Residues 572-585 (QVFREKVQESRPQR) show a composition bias toward basic and acidic residues. Residues 586–599 (LNDSNHTVRLNNEQ) are compositionally biased toward polar residues.

This is an uncharacterized protein from Escherichia coli (strain K12).